Reading from the N-terminus, the 695-residue chain is Amphiphysin (695 aa).

2 coiled-coil regions span residues 10–83 (AKNV…SLHE) and 144–191 (DYDS…QEEL). A BAR domain is found at 24 to 240 (VLQKLGKADE…MTKLGDQHAD (217 aa)). 2 disordered regions span residues 244-312 (TIQG…VTPT) and 486-617 (GAPG…EASQ). Ser252 bears the Phosphoserine mark. Thr260 is modified (phosphothreonine). Pro residues predominate over residues 261 to 274 (PSPPEEPSPLPSPT). Ser262, Ser268, Ser272, and Ser276 each carry phosphoserine. Phosphothreonine is present on Thr280. A phosphoserine mark is found at Ser506 and Ser638. One can recognise an SH3 domain in the interval 622 to 695 (GFLYKVETLH…FPENFTRRLD (74 aa)).

In terms of assembly, heterodimer with BIN1. Binds SH3GLB1. Interacts with REPS1 and SGIP1. Binds AP2A2. Interacts with AP2B1. Interacts with DNM1 and SYNJ1. Neurons, certain endocrine cell types and spermatocytes.

The protein resides in the cytoplasmic vesicle. The protein localises to the secretory vesicle. Its subcellular location is the synaptic vesicle membrane. It localises to the cytoplasm. It is found in the cytoskeleton. May participate in mechanisms of regulated exocytosis in synapses and certain endocrine cell types. May control the properties of the membrane associated cytoskeleton. The protein is Amphiphysin (AMPH) of Homo sapiens (Human).